The following is a 280-amino-acid chain: Large ribosomal subunit protein uL2 (280 aa).

2 disordered regions span residues 1 to 47 (MAIR…NVHG) and 224 to 280 (VVMN…SKKR). Basic and acidic residues predominate over residues 23-33 (EITRSTPEKSL). Residues 37–47 (LPKKGGRNVHG) show a composition bias toward basic residues. The span at 258–268 (RNPNRYSNNMI) shows a compositional bias: polar residues. Basic residues predominate over residues 270–280 (QRRRTNKSKKR).

The protein belongs to the universal ribosomal protein uL2 family. Part of the 50S ribosomal subunit. Forms a bridge to the 30S subunit in the 70S ribosome.

One of the primary rRNA binding proteins. Required for association of the 30S and 50S subunits to form the 70S ribosome, for tRNA binding and peptide bond formation. It has been suggested to have peptidyltransferase activity; this is somewhat controversial. Makes several contacts with the 16S rRNA in the 70S ribosome. The sequence is that of Large ribosomal subunit protein uL2 from Corynebacterium diphtheriae (strain ATCC 700971 / NCTC 13129 / Biotype gravis).